The primary structure comprises 495 residues: Serine/threonine protein phosphatase 2A 57 kDa regulatory subunit B' alpha isoform (495 aa).

Residues 1-13 (MFKKIMKGANRKA) are compositionally biased toward basic residues. Disordered stretches follow at residues 1 to 61 (MFKK…AATT) and 462 to 495 (QAKSKQVEEQRQNRWRRLDEAVEEREREDPMITS). Residues 49-61 (VPSSPNSMAAATT) are compositionally biased toward polar residues.

The protein belongs to the phosphatase 2A regulatory subunit B56 family. In terms of assembly, PP2A consists of a common heteromeric enzyme, composed of a catalytic subunit (subunits C), a constant regulatory subunit (subunit A), and a variety of regulatory subunits such as subunits B (the R2/B/PR55/B55, R3/B''/PR72/PR130/PR59 and R5/B'/B56 families). Interacts with BZR1. Interacts with BRI1. Interacts with SRK2E/OST1. In terms of tissue distribution, expressed ubiquitously, higher levels in leaves.

It is found in the nucleus. The protein localises to the cytoplasm. In terms of biological role, the B regulatory subunit may modulate substrate selectivity and catalytic activity, and may also direct the localization of the catalytic enzyme to a particular subcellular compartment. Required for the formation of the PP2A holoenzyme that positively regulates brassinosteroid signaling by dephosphorylating and activating BZR1. This is Serine/threonine protein phosphatase 2A 57 kDa regulatory subunit B' alpha isoform (B'ALPHA) from Arabidopsis thaliana (Mouse-ear cress).